Here is a 559-residue protein sequence, read N- to C-terminus: Nicotinate phosphoribosyltransferase 1 (559 aa).

Residues Tyr33 and Thr221 each coordinate nicotinate. His224 carries the post-translational modification Phosphohistidine. Residue Arg331 participates in nicotinate binding. Position 393 (Thr393) interacts with 5-phospho-alpha-D-ribose 1-diphosphate.

This sequence belongs to the NAPRTase family. It depends on Mg(2+) as a cofactor. The cofactor is Mn(2+). Post-translationally, transiently phosphorylated on a His residue during the reaction cycle. Phosphorylation strongly increases the affinity for substrates and increases the rate of nicotinate D-ribonucleotide production. Dephosphorylation regenerates the low-affinity form of the enzyme, leading to product release.

The catalysed reaction is nicotinate + 5-phospho-alpha-D-ribose 1-diphosphate + ATP + H2O = nicotinate beta-D-ribonucleotide + ADP + phosphate + diphosphate. It participates in cofactor biosynthesis; NAD(+) biosynthesis; nicotinate D-ribonucleotide from nicotinate: step 1/1. Catalyzes the first step in the biosynthesis of NAD from nicotinic acid, the ATP-dependent synthesis of beta-nicotinate D-ribonucleotide from nicotinate and 5-phospho-D-ribose 1-phosphate. Helps prevent cellular oxidative stress via its role in NAD biosynthesis. The polypeptide is Nicotinate phosphoribosyltransferase 1 (Arabidopsis thaliana (Mouse-ear cress)).